A 275-amino-acid chain; its full sequence is 4-diphosphocytidyl-2-C-methyl-D-erythritol kinase (275 aa).

The active site involves Lys14. 94 to 104 (PMEAGLGGGSA) serves as a coordination point for ATP. Asp134 is a catalytic residue.

It belongs to the GHMP kinase family. IspE subfamily.

The enzyme catalyses 4-CDP-2-C-methyl-D-erythritol + ATP = 4-CDP-2-C-methyl-D-erythritol 2-phosphate + ADP + H(+). It functions in the pathway isoprenoid biosynthesis; isopentenyl diphosphate biosynthesis via DXP pathway; isopentenyl diphosphate from 1-deoxy-D-xylulose 5-phosphate: step 3/6. In terms of biological role, catalyzes the phosphorylation of the position 2 hydroxy group of 4-diphosphocytidyl-2C-methyl-D-erythritol. This Thermosipho africanus (strain TCF52B) protein is 4-diphosphocytidyl-2-C-methyl-D-erythritol kinase.